Consider the following 184-residue polypeptide: Small ribosomal subunit protein uS4 (184 aa).

The S4 RNA-binding domain maps to 108–172 (RRLQTQVHRL…SPMTKESHPE (65 aa)). Positions 163–184 (SPMTKESHPERPAQIAASVVEE) are disordered.

It belongs to the universal ribosomal protein uS4 family. In terms of assembly, part of the 30S ribosomal subunit. Contacts protein S5. The interaction surface between S4 and S5 is involved in control of translational fidelity.

One of the primary rRNA binding proteins, it binds directly to 16S rRNA where it nucleates assembly of the body of the 30S subunit. In terms of biological role, with S5 and S12 plays an important role in translational accuracy. This Methanococcoides burtonii (strain DSM 6242 / NBRC 107633 / OCM 468 / ACE-M) protein is Small ribosomal subunit protein uS4.